The primary structure comprises 452 residues: Deoxybrevianamide E synthase notF (452 aa).

Residues 1 to 19 (MTAPELRVDTFRAPEDAPK) are compositionally biased toward basic and acidic residues. The interval 1–38 (MTAPELRVDTFRAPEDAPKEPSAQQPRLPSSPSPAQAL) is disordered. Residues 21–38 (PSAQQPRLPSSPSPAQAL) are compositionally biased toward low complexity. Residue Glu108 participates in brevianamide F binding. Residues Arg122, Lys212, Tyr214, Lys282, Tyr284, Tyr371, Tyr436, and Tyr440 each coordinate dimethylallyl diphosphate.

Belongs to the tryptophan dimethylallyltransferase family. In terms of assembly, monomer.

The enzyme catalyses brevianamide F + dimethylallyl diphosphate = deoxybrevianamide E + diphosphate. It functions in the pathway alkaloid biosynthesis. With respect to regulation, addition of 5 mM Mg(2+), Ca(2+) or Mn(2+) slightly enhances catalysis (about 100-120%). Significant reduction of enzyme activity (2%-35%) is observed with Cu(2+), Zn(2+), Fe(2+), or Sn(2+) (5 mM). Functionally, deoxybrevianamide E synthase; part of the gene cluster that mediates the biosynthesis of notoamide, a fungal indole alkaloid that belongs to a family of natural products containing a characteristic bicyclo[2.2.2]diazaoctane core. The first step of notoamide biosynthesis involves coupling of L-proline and L-tryptophan by the bimodular NRPS notE, to produce cyclo-L-tryptophan-L-proline called brevianamide F. The reverse prenyltransferase notF then acts as a deoxybrevianamide E synthase and converts brevianamide F to deoxybrevianamide E via reverse prenylation at C-2 of the indole ring leading to the bicyclo[2.2.2]diazaoctane core. Deoxybrevianamide E is further hydroxylated at C-6 of the indole ring, likely catalyzed by the cytochrome P450 monooxygenase notG, to yield 6-hydroxy-deoxybrevianamide E. 6-hydroxy-deoxybrevianamide E is a specific substrate of the prenyltransferase notC for normal prenylation at C-7 to produce 6-hydroxy-7-prenyl-deoxybrevianamide, also called notoamide S. As the proposed pivotal branching point in notoamide biosynthesis, notoamide S can be diverted to notoamide E through an oxidative pyran ring closure putatively catalyzed by either notH cytochrome P450 monooxygenase or the notD FAD-linked oxidoreductase. This step would be followed by an indole 2,3-epoxidation-initiated pinacol-like rearrangement catalyzed by the notB FAD-dependent monooxygenase leading to the formation of notoamide C and notoamide D. On the other hand notoamide S is converted to notoamide T by notH (or notD), a bifunctional oxidase that also functions as the intramolecular Diels-Alderase responsible for generation of (+)-notoamide T. To generate antipodal (-)-notoaminide T, notH' (or notD') in Aspergillus versicolor is expected to catalyze a Diels-Alder reaction leading to the opposite stereochemistry. The remaining oxidoreductase notD (or notH) likely catalyzes the oxidative pyran ring formation to yield (+)-stephacidin A. The FAD-dependent monooxygenase notI is highly similar to notB and is predicted to catalyze a similar conversion from (+)-stephacidin A to (-)-notoamide B via the 2,3-epoxidation of (+)-stephacidin A followed by a pinacol-type rearrangement. Finally, it remains unclear which enzyme could be responsible for the final hydroxylation steps leading to notoamide A and sclerotiamide. The chain is Deoxybrevianamide E synthase notF from Aspergillus sp. (strain MF297-2).